The sequence spans 167 residues: U-scoloptoxin(08)-Er5b (167 aa).

The signal sequence occupies residues 1 to 22 (MKTNCEFPLLCLLIVLVANVEG). Residues 23-94 (EVEDTGLKMV…KRLWRNWERR (72 aa)) constitute a propeptide that is removed on maturation. RLWRNWE repeat units lie at residues 34-40 (RLWRNWE), 61-67 (RLWRNWE), and 86-92 (RLWRNWE). Gln-95 carries the pyrrolidone carboxylic acid modification. One copy of the RLWRNWE 4; approximate repeat lies at 107 to 113 (ELWRNWE). A propeptide spanning residues 112–118 (WEDLKRR) is cleaved from the precursor. Residue Gln-119 is modified to Pyrrolidone carboxylic acid. Residues 134 to 140 (RLWRNWE) form an RLWRNWE 5 repeat. The propeptide occupies 139–167 (WEDNHATLRKRSADSLSRQKRLGKERGKE). Residues 147 to 167 (RKRSADSLSRQKRLGKERGKE) form a disordered region.

Belongs to the scoloptoxin-08 family. In terms of tissue distribution, expressed by the venom gland.

The protein localises to the secreted. The polypeptide is U-scoloptoxin(08)-Er5b (Ethmostigmus rubripes (Giant centipede)).